Consider the following 4007-residue polypeptide: MVYTHSPKEPIAIIGTGCRFPGGSTSPSKLWDLLYSPRDLTREVPAESRFNPKGFYNVDGEHHGASNATNAYFIEEDPRYFDAGFFSIAPREAESIDPQQRLLLETVYEAMENAGLTLNGMRGSATSAYMGAMSADYTDTQLRDIENVSKYMITGTSRALLANRLSYFFDWKGPSISVDTACSSSLAAVHLGVQALRAGECTISCVGGSNIILNPDCYLAATSLHLLSPTGRSQMWDQAADGYARGEGVCVFFMKTLSQALRDGDRIDALLRETCVNSDGRTQGIALPSAEAQVSLMRTAYKNAGLDLSKAEDRPQYIEAHGTGTQAGDPREAYAIATTFFPPGEDHSHRPKLVVGSVKTIIGHTEGCAGIAGILKAVLAMRHKTIPPNQHFHNLNPSVKPSFKHLSIATSPQPWPVVPPDTPLRASVNGFGSGGTNCHAIVESYVPEIHDNGPWGKPKEMTQVPNGVAAPETDFSPIPLIFSASSGTALRAMLERYQEYLERTEVSLLRLAMTLNSHRSTLPVRVSIPGTSKADVLAAIRTQLAKVGSNPGAEIGTRSSVPEFDHVRRPKILGVFTGQGAQWAGMGQGLMAKSALFRQVIEVMEEAMAQLPDGPEWSLKEEIMKPPKTSRLGEAEISLPVCAALQVGLVKVLRSAGITFSMVVGHSGGEIGSAYAAGKISEVDAIKIAYYRGVYTKLAIGKDGKKGGMIAVGFGYEDGLNFCAMEQFADRLTVAASNSPKSVTLSGDLDAVHEAKELLDAEGVFNRVLRLDTAYHSPHMYPCAAPYLAAIERCGLVAGKSNGTAWASSVYDDNRMMTSAQDKDLEAAYWKDNLIGRVLFSQAVERALDEGNGDFDLALEIGPHPSLKGPTLETIRHKIGSEIPYSGVLDRKADDILALSTALGFSWLTLGSGVVDFAGYVSGFDPSNASILNAPALPDLPTYPWDHKKVLYRESRLNKNVRHRVDPPHPLLGSRTPDDTDYEPRWRNFLIMEELPWLRDHCVQGQIIVPAATYSVMALEAAKVLCRGKHVQSIELSDVAILRPIVLDEASDGTETLFSVRSDLDSNKKHEDEIHAQFTLSAGAMDDRHLRTAATGHIRITLAAEAPSSFPNGPRPTELDLLPTSVDRFYASMDEIGLSYSGPFRAMTSMKRRLNVASATVAVDRDLAGTIPVHPTWLDACFQTFLAAFAAPRDGSLWTAFMPTAIGRMVFSPSSTSQVPGRSVTVDAHITDFAPGYQVSLPTLTGDMSIFNSETNQLQIQIEDFVMSSFLPASEKDDRRFYLQNVWGQEMLSGALCAAAERCVAPTESESKIIDTCEKAVHYYLSKLKAAGLLDQWADKNPGLRSLMNEIEARVTSIPEQSDLVSMLGEVGEHIDLVLVRTIGESLLNSPSEGLGPITPSPMGALISRWHHEGLGFAQLQRHFVSAAKQISHQHANLRILQVGPSSPGLVRSVCQELGRSLERYTLVDDSEQTIEEMKSALAADQLRVDFTTASVENGIDAVNHLTSAGGFDLVIVHKAFTKQVTALKTVRNLLRPGGFMLMMAATGAQLRFPFMLMSTLPSLDDERLAQTKFINATRAETHDLLRQIGFSGVDSIALDNVPDKHTFSVVVSQALDDHIAFLRSPLTSPSPVPLSGNLLVVGGFSADIAKLATAIQSLVSTVWHGDIINVRTLAELDDEASTVEAVLSLTDLDRPVLEDVRAPTFRGLQRLFSEAKTVLWITHRAKADNPYHNATIGLGRSFQSENPQKVLQFLDVDTLDGVESAIAETFLKLIGGVNMRNSNPADPTRLWTIEPEVSLENGKYLVPRLFPDTERNDRLNALRRKVQTQVSVETQPISLSRSAQSDQVAYTAEAVHFHRDLADGATDPVTIQVELCSTEPVIPNIDNEDLFCFVGRTSEGARLVGLSTSNSSVVKVPREWTIPVDKHTSHDQGAFVLELRNEIQSLVIAKSIPPGSTTLIYEPDPHLAASLQRPGRPATSSVSFRARSTWSIPGSHILIDPHASRKDIQAKVPPKTRMLIHMEQGPETCEFLALRQALPPYATVVAFNDLAADDVNPRELLAEALSIIRGDSQSTKVPFDPSSVVKASALVAGGTREHANAAVVDWTGAQSITLSPRPVDTRNLFSPNKTYLLVGLTGHIGQSICRWMVQGGARHIVVTSRHPEKQGQLWREELLRQGVNIVIEAADVTKEHDLLDLRARIVSSMPPVGGIANGAMVLDDKLFIDMPFESFQAAMKPKVQGSIYLEEVFSADNLDFFLFFSSISVMTGQRTQANYVAANNFMVAMAERRRARGLPASVIDIGMVVGIGVIQRSQNDKGVSAMENSIRQMDYMPVSETDLHHLLAEAILVGQRDESPELITGLETYKPVEGEAPFWHHNVRFSHLITDPDAAQAGADSAGSAQKSLKEMLLSSGGPEEARKVMENALLQYLASSLKLSRETIYTDVPIIDLGIDSLVAVQIRNWTWAEAGYDLPVLKILGGSSVTQICDEVVASLSFDKSSIAAAKVDSQAAPAHKLRPWDKPSADTKRTDSIAPVPRSQIAANGPNGLPNGALKKASKLAVKVRPLWTTQAGGKDTKKGPRPAPIRIQPLSLGQSRLYFLSQYMDDDRVLNCTISYALSGKLDVSKLEQSLIQVVQRHEALRTSFYTDEKDGKPMQGLLEKSPFRLRVVPGVSASSDVETEFNLIRYRPYDLEQADTFAATLLSHSPDSHTLICGYHHIIMDGVSWQIFQKDLAMFYNNSGIADSAKHLPAQYSEFTRKQQEDLSCGAYAERLRFFQDQFREPVESLPLFPFAKVGTRKVVKQYAVQEATTHLNAKVVSAIKQASQTSRTTPFHFYLSAFQVLLHRLLETDKMCIGVVDANRSDQNFVNTIGFFLETIPLWFKVNSEQRFVELLKETRTKAYAALAQTGVPTEEILRACGVASSTTETPLFQVCFNYRMGAGRTAALQGVEMKFLDYVDAQNPFDLVATVDDLDDGTAMITLYLQDYLYDQEGAQLLATMYANVLQVLAENPERLVGSVSISNATLEDEGVKLGTGPILDLVAPSTPTLSKIFHTWVDKDPHALAVKDTTGKSKTYVQLAERANAIAASLLNAGAAPSIPIGVLLDPGVDTIATILAILRIGAAYVPLDTRSSDAVLSDILQESQPGIVIHHSATAPRSQILLKASAKTKLVTLNAVPQKTIRKIQDVSVPEGLAMILYTSGSTGSPKGIPLTNANIRTPILGVSERVPLGREVVLQQSGQGFDAAVYQIFIALANGGTLIMVDNRDDPAKVAALMAQESVTCTTHIVSEMQALLKYGYDELRNCSSWRIAMVAGEAFTVHLLDQFRALNRPDLKVINAYGPTEASICSSLGEVSFNRISSSETSIPIGKAIPNYGTYIVDQHCKPVPLGWPGEVAIAGPGVASGYLNLGELTQAKFRSAATLGEVFGSDCLYLTGDRGRMLSDGSIVLSGRVDGDDQVKIRGHRVQLGDVARALVQASRGVFADAAVILKGDDTSNPQLVAYVVFSRTSNIQDQQTYLRQLNQDLPVPAYMRPAITIPLDTLPVTDRGKLDSKKLASLPLPSISVDYEEDEQLTPTEARLRDVWKNVLGDIASSIPIRRSSDFFSVGGNSLILLALKAEIAQVFGVGLSVSELFQASTLELLAARLDGTSLLAQINWEEETAPDETQFTLPPPINGINGHGSSNGHAQGISVLLTGATGFLGGHILRQLVQLPSVEHVHCVAIRPNKVDVRRQLSVESPKIIRYSGDLALPNMGMSESEFSDLFKSIDVIVHNGAEVSHMKNYRSLRAANFLSTVGLARAAVSRGIPIHYISTGGVARLSVADEQPEASLAAFHPPIDGSDGYVASKWASEVFLEKVQRRFQGQVWIHRPSSITGDDVPDNDIAHSLLKFSRELGAVPELTGSGFFDFINVETVSNNIAASVVRSSEKSGGGLIYLHQSGEQVIPVGDLQKYVEELEGRPLQVLPLKEWVDLSIRKGLDEVLGSYMLASKGVIRAPLLQRGPHVE.

One can recognise a Ketosynthase family 3 (KS3) domain in the interval 8–444 (KEPIAIIGTG…GTNCHAIVES (437 aa)). Active-site for beta-ketoacyl synthase activity residues include Cys182, His321, and His364. Residues 575–897 (VFTGQGAQWA…VLDRKADDIL (323 aa)) form a malonyl-CoA:ACP transacylase (MAT) domain region. Residues 969 to 1105 (HPLLGSRTPD…GHIRITLAAE (137 aa)) form an N-terminal hotdog fold region. Residues 969–1147 (HPLLGSRTPD…LSYSGPFRAM (179 aa)) form a dehydratase (DH) domain region. The 308-residue stretch at 969–1276 (HPLLGSRTPD…MSSFLPASEK (308 aa)) folds into the PKS/mFAS DH domain. His1001 serves as the catalytic Proton acceptor; for dehydratase activity. The C-terminal hotdog fold stretch occupies residues 1120-1276 (DLLPTSVDRF…MSSFLPASEK (157 aa)). The active-site Proton donor; for dehydratase activity is the Asp1179. The segment at 2131-2305 (TYLLVGLTGH…PASVIDIGMV (175 aa)) is ketoreductase (KR) domain. Residues 2418–2495 (EARKVMENAL…QICDEVVASL (78 aa)) enclose the Carrier 1 domain. Ser2455 is modified (O-(pantetheine 4'-phosphoryl)serine). Positions 2513–2550 (PAHKLRPWDKPSADTKRTDSIAPVPRSQIAANGPNGLP) are disordered. Positions 2518–2531 (RPWDKPSADTKRTD) are enriched in basic and acidic residues. Positions 2589 to 2885 (QPLSLGQSRL…LETIPLWFKV (297 aa)) are condensation (C) domain. Residues 3076–3478 (TYVQLAERAN…LGDVARALVQ (403 aa)) are adenylation (A) domain. One can recognise a Carrier 2 domain in the interval 3576-3652 (TPTEARLRDV…LLAARLDGTS (77 aa)). The residue at position 3612 (Ser3612) is an O-(pantetheine 4'-phosphoryl)serine. The reductase (R) domain stretch occupies residues 3696 to 3920 (LTGATGFLGG…INVETVSNNI (225 aa)).

It in the C-terminal section; belongs to the NRP synthetase family.

Its pathway is secondary metabolite biosynthesis. PKS-NRPS hybrid synthetase; part of the gene cluster that mediates the biosynthesis of pseurotin A, a competitive inhibitor of chitin synthase and an inducer of nerve-cell proliferation. The PKS-NRPS hybrid synthetase psoA is responsible for the biosynthesis of azaspirene, one of the first intermediates having the 1-oxa-7-azaspiro[4,4]-non-2-ene-4,6-dione core of pseurotin, via condensation of one acetyl-CoA, 4 malonyl-CoA, and a L-phenylalanine molecule. The dual-functional monooxygenase/methyltransferase psoF seems to be involved in the addition of the C3 methyl group onto the pseurotin scaffold. Azaspirene is then converted to synerazol through 4 steps including oxidation of C17 by the cytochrome P450 monooxygenase psoD, O-methylation of the hydroxy group of C8 by the methyltransferase psoC, and the trans-to-cis isomerization of the C13 olefin by the glutathione S-transferase psoE. The fourth step of synerazol production is performed by the dual-functional monooxygenase/methyltransferase psoF which seems to catalyze the epoxidation of the intermediate deepoxy-synerazol. Synerazol can be attacked by a water molecule nonenzymatically at two different positions to yield two diol products, pseurotin A and pseurotin D. This is PKS-NRPS hybrid synthetase psoA from Aspergillus fumigatus (strain ATCC MYA-4609 / CBS 101355 / FGSC A1100 / Af293) (Neosartorya fumigata).